Consider the following 461-residue polypeptide: Elongation factor 1-alpha (461 aa).

Gly2 is modified (n,N,N-trimethylglycine). Residue Lys3 is modified to N6,N6-dimethyllysine; alternate. Lys3 is modified (N6-methyllysine; alternate). Residues 6-241 (KTHINVVVIG…DSIEPPKRPT (236 aa)) enclose the tr-type G domain. The interval 15–22 (GHVDSGKS) is G1. A GTP-binding site is contributed by 15–22 (GHVDSGKS). Lys31 bears the N6-methyllysine mark. The segment at 71-75 (GITID) is G2. Lys80 carries the N6,N6,N6-trimethyllysine modification. The G3 stretch occupies residues 92–95 (DAPG). Residues 92 to 96 (DAPGH) and 154 to 157 (NKMD) contribute to the GTP site. Residues 154 to 157 (NKMD) form a G4 region. The tract at residues 193–195 (SGF) is G5. N6,N6-dimethyllysine; alternate is present on Lys317. Lys317 carries the post-translational modification N6-methyllysine; alternate. Position 391 is an N6-methyllysine (Lys391).

The protein belongs to the TRAFAC class translation factor GTPase superfamily. Classic translation factor GTPase family. EF-Tu/EF-1A subfamily.

Its subcellular location is the cytoplasm. Functionally, this protein promotes the GTP-dependent binding of aminoacyl-tRNA to the A-site of ribosomes during protein biosynthesis. This chain is Elongation factor 1-alpha (TEF), found in Pseudoechria curvicolla (Podospora curvicolla).